The sequence spans 62 residues: Large ribosomal subunit protein bL28 (62 aa).

Belongs to the bacterial ribosomal protein bL28 family.

This is Large ribosomal subunit protein bL28 from Streptococcus uberis (strain ATCC BAA-854 / 0140J).